The following is a 524-amino-acid chain: METIGRGTWIDKLAHELVEREEALGRDTEMINVESGLGASGIPHMGSLGDAVRAYGVGLAVGDMGHSFRLIAYFDDLDGLRKVPEGMPSSLEEHIARPVSAIPDPYGCHDSYGMHMSGLLLEGLDALGIEYDFRRARDTYRDGLLAEQIHRILSNSSVIGEKIAEMVGQEKFRSSLPYFAVCEQCGKMYTAESVEYLADSRKVRYRCGDAEVGGRKIAGCGHEGEADTGGAGGKLAWKVEFAARWQAFDVRFEAYGKDIMDSVRINDWVSDEILSSPHPHHTRYEMFLDKGGKKISKSSGNVVTPQKWLRYGTPQSILLLMYKRITGARELGLEDVPSLMDEYGDLQREYFAGGGRGGKAREAKNRGLFEYTNLLEAQEGPRPHAGYRLLVELSRLFRENRTERVTKKLVEYGVIDGPSPGIERLIALAGNYADDMYSAERTEVELDGATRGALSELAEMLGSAPEGGLQDVIYGVAKSHGVPPRDFFKALYRIILDASSGPRIGPFIEDIGREKVAGMIRGRL.

The 'HIGH' region motif lies at 39 to 47 (ASGIPHMGS). A 'KMSKS' region motif is present at residues 294 to 298 (KISKS). K297 contributes to the ATP binding site.

It belongs to the class-I aminoacyl-tRNA synthetase family.

The protein localises to the cytoplasm. It carries out the reaction tRNA(Lys) + L-lysine + ATP = L-lysyl-tRNA(Lys) + AMP + diphosphate. The chain is Lysine--tRNA ligase (lysS) from Cenarchaeum symbiosum.